Consider the following 507-residue polypeptide: ATP synthase subunit beta (507 aa).

The tract at residues 1 to 22 (MSGLASKAKSRVKSSKGKNSTN) is disordered. 183–190 (GGAGVGKT) provides a ligand contact to ATP.

It belongs to the ATPase alpha/beta chains family. F-type ATPases have 2 components, CF(1) - the catalytic core - and CF(0) - the membrane proton channel. CF(1) has five subunits: alpha(3), beta(3), gamma(1), delta(1), epsilon(1). CF(0) has three main subunits: a(1), b(2) and c(9-12). The alpha and beta chains form an alternating ring which encloses part of the gamma chain. CF(1) is attached to CF(0) by a central stalk formed by the gamma and epsilon chains, while a peripheral stalk is formed by the delta and b chains.

It is found in the cell inner membrane. The enzyme catalyses ATP + H2O + 4 H(+)(in) = ADP + phosphate + 5 H(+)(out). Produces ATP from ADP in the presence of a proton gradient across the membrane. The catalytic sites are hosted primarily by the beta subunits. The chain is ATP synthase subunit beta from Ehrlichia chaffeensis (strain ATCC CRL-10679 / Arkansas).